The chain runs to 321 residues: tRNA-dihydrouridine synthase B (321 aa).

FMN contacts are provided by residues 16–18 (PMA) and Gln70. Catalysis depends on Cys100, which acts as the Proton donor. FMN contacts are provided by residues Lys139, 200 to 202 (NGD), and 224 to 225 (GR).

It belongs to the Dus family. DusB subfamily. Requires FMN as cofactor.

The catalysed reaction is a 5,6-dihydrouridine in tRNA + NAD(+) = a uridine in tRNA + NADH + H(+). It catalyses the reaction a 5,6-dihydrouridine in tRNA + NADP(+) = a uridine in tRNA + NADPH + H(+). Its function is as follows. Catalyzes the synthesis of 5,6-dihydrouridine (D), a modified base found in the D-loop of most tRNAs, via the reduction of the C5-C6 double bond in target uridines. The polypeptide is tRNA-dihydrouridine synthase B (Shigella flexneri).